Consider the following 315-residue polypeptide: tRNA pseudouridine synthase B (315 aa).

The Nucleophile role is filled by Asp-54.

The protein belongs to the pseudouridine synthase TruB family. Type 1 subfamily.

It catalyses the reaction uridine(55) in tRNA = pseudouridine(55) in tRNA. Its function is as follows. Responsible for synthesis of pseudouridine from uracil-55 in the psi GC loop of transfer RNAs. The chain is tRNA pseudouridine synthase B from Cupriavidus pinatubonensis (strain JMP 134 / LMG 1197) (Cupriavidus necator (strain JMP 134)).